The primary structure comprises 405 residues: Type III polyketide synthase 10 (405 aa).

Positions 1 to 18 (MVSTNAGGIASKQASSMA) are enriched in polar residues. Residues 1-20 (MVSTNAGGIASKQASSMAPN) are disordered. The active-site Nucleophile is the C170.

The protein belongs to the thiolase-like superfamily. Chalcone/stilbene synthases family. In terms of assembly, interacts with STS1. In terms of tissue distribution, expressed in adult flowers.

Its subcellular location is the endoplasmic reticulum. Plant type III polyketide synthases (PKSs) that catalyzes the condensation of fatty acyl-CoA with malonyl-CoA to generate triketide and tetraketide alpha-pyrones, the main components of pollen exine and potential sporopollenin precursors. May be involved in the synthesis of sporopollenin precursors in tapetal cells to regulate pollen wall formation. Required for exine and Ubisch body formation in anthers. Does not possess chalcone synthase (CHS) activity in vitro with the substrates 4-coumaroyl-CoA and malonyl-CoA. This Oryza sativa subsp. japonica (Rice) protein is Type III polyketide synthase 10.